We begin with the raw amino-acid sequence, 805 residues long: Transcription factor E2f1 (805 aa).

3 disordered regions span residues 9–45, 119–208, and 224–255; these read APIN…TTGH, AAAA…LRHD, and PASH…RNRA. Composition is skewed to low complexity over residues 12–37 and 119–134; these read NNSN…QQHY and AAAA…QLQQ. Polar residues-rich tracts occupy residues 144 to 154 and 181 to 195; these read RKATGKSNDIT and HHQT…SSAP. A PIP-box K+4 motif motif is present at residues 147–161; sequence TGKSNDITNYYKVKR. Residues 240 to 249 are compositionally biased toward low complexity; sequence AASVASSSSS. The DNA-binding element occupies 253–318; sequence NRADTSLGIL…KKSKNNIQWR (66 aa). The tract at residues 318 to 411 is dimerization; it reads RCGQSMVSQE…LPNTKLPREI (94 aa). Ser-434 carries the phosphoserine modification. Disordered stretches follow at residues 578–650 and 714–743; these read SLTE…QRRS and GAGA…DANS. 2 stretches are compositionally biased toward low complexity: residues 595–615 and 623–636; these read AAAA…NSHN and SNHS…NSKS. Over residues 637 to 647 the composition is skewed to polar residues; the sequence is QPPTIGYGSSQ.

Belongs to the E2F/DP family. In terms of assembly, heterodimer of E2f and Dp. Cooperates to give sequence-specific DNA binding and optimal trans-activation. Interacts with PCNA. Post-translationally, ubiquitinated by the DCX(DTL) complex, also named CRL4(CDT2) complex, leading to its degradation during S phase. Ubiquitination by the DCX(DTL) complex is essential for cell cycle control and is PCNA-dependent: interacts with PCNA via its PIP-box, while the presence of the containing the 'K+4' motif in the PIP box, recruit the DCX(DTL) complex, leading to its degradation. As to expression, segmentally repeated expression throughout early embryos is restricted to the ventral nerve cord in later embryos.

It localises to the nucleus. Its function is as follows. Transcriptional activator that binds to E2f sites. Required for wild-type growth in mitotic and polytene tissues, Contributes to the expression of replication genes at the G1-S transition and Cyclin E. Activates cell proliferation in wing imaginal disk, which requires expression of vg. In Drosophila melanogaster (Fruit fly), this protein is Transcription factor E2f1.